The chain runs to 413 residues: Protein PHR1-LIKE 1 (413 aa).

Disordered stretches follow at residues 171 to 196 (SEPN…TPFL) and 208 to 233 (QQQM…SKQR). Composition is skewed to polar residues over residues 181 to 191 (DSSSHNPNSEI) and 208 to 231 (QQQM…ATSK). Residues 228 to 288 (ATSKQRMRWT…HLQKYRTARY (61 aa)) enclose the HTH myb-type domain. A DNA-binding region (H-T-H motif) is located at residues 259 to 284 (PKAVLKLLNNPGLTIYHVKSHLQKYR). Residues 322 to 342 (TQALRLQMEVQKRLHEQLEIQ) form a coiled coil region. Positions 335 to 340 (LHEQLE) match the LHEQLE motif. Positions 363 to 413 (QQKIQDNKSSSSEASPKQCNGSFAEVEVGLETLTGDQNESASASRKRVRED) are disordered. Composition is skewed to polar residues over residues 369–383 (NKSS…QCNG) and 396–405 (TGDQNESASA).

It belongs to the MYB-CC family. As to quaternary structure, homodimers and heterodimers. Interacts with MED25. Does not interact with PHL2 or PHL3. In terms of tissue distribution, expressed in shoots and roots.

It is found in the nucleus. Transcription factor acting as central integrator of phosphate starvation responses. Regulates FER1 expression upon phosphate starvation, linking iron and phosphate homeostasis. The sequence is that of Protein PHR1-LIKE 1 (PHL1) from Arabidopsis thaliana (Mouse-ear cress).